Reading from the N-terminus, the 126-residue chain is RxLR effector protein BLR31 (126 aa).

Positions 1–22 (MLLSRAISVLALLACIRCGVHA) are cleaved as a signal peptide. Positions 44 to 58 (RLLRTSVDFKDSEER) match the RxLR-dEER motif.

The protein belongs to the RxLR effector family.

It localises to the secreted. The protein resides in the host cell. Functionally, secreted effector that triggers a hypersensitive response (HR) in 3 Lactuca saligna accessions (CGN05947, CGN05310, CGN05304). The chain is RxLR effector protein BLR31 from Bremia lactucae (Lettuce downy mildew).